A 246-amino-acid polypeptide reads, in one-letter code: Large ribosomal subunit protein uL3 (246 aa).

Disordered stretches follow at residues 140–162 (SHRS…NKKM) and 214–246 (ADVP…EENA). Q151 carries the N5-methylglutamine modification. Positions 234–246 (EAAPEAPASEENA) are enriched in low complexity.

Belongs to the universal ribosomal protein uL3 family. As to quaternary structure, part of the 50S ribosomal subunit. Forms a cluster with proteins L14 and L19. Post-translationally, methylated by PrmB.

One of the primary rRNA binding proteins, it binds directly near the 3'-end of the 23S rRNA, where it nucleates assembly of the 50S subunit. In Methylorubrum extorquens (strain CM4 / NCIMB 13688) (Methylobacterium extorquens), this protein is Large ribosomal subunit protein uL3.